The sequence spans 135 residues: Interleukin-4 (135 aa).

An N-terminal signal peptide occupies residues 1–24; that stretch reads MGLTSQLIPVLVCLLACTSHFVHG. 3 cysteine pairs are disulfide-bonded: Cys27–Cys135, Cys48–Cys85, and Cys70–Cys105. 2 N-linked (GlcNAc...) asparagine glycosylation sites follow: Asn62 and Asn96.

Belongs to the IL-4/IL-13 family.

Its subcellular location is the secreted. Participates in at least several B-cell activation processes as well as of other cell types. It is a costimulator of DNA-synthesis. It induces the expression of class II MHC molecules on resting B-cells. It enhances both secretion and cell surface expression of IgE and IgG1. It also regulates the expression of the low affinity Fc receptor for IgE (CD23) on both lymphocytes and monocytes. Positively regulates IL31RA expression in macrophages. Stimulates autophagy in dendritic cells by interfering with mTORC1 signaling and through the induction of RUFY4. This Cervus elaphus (Red deer) protein is Interleukin-4 (IL4).